The primary structure comprises 337 residues: Mitochondrial amidoxime-reducing component 1 (337 aa).

A lipid anchor (N-myristoyl glycine) is attached at Gly2. At 2 to 20 the chain is on the mitochondrial matrix side; that stretch reads GAAGSSALARFVLLAQSRP. A helical; Signal-anchor for type II membrane protein transmembrane segment spans residues 21–40; sequence GWLGVAALGLTAVALGAVAW. At 41 to 337 the chain is on the cytoplasmic side; sequence RRAWPTRRRR…VGDPVYLLGQ (297 aa). Mo-molybdopterin is bound by residues Lys67, Ser68, and Arg92. Residues 93–183 form an MOSC N-terminal region region; it reads FWLVINQEGN…KSQPYRLVHF (91 aa). In terms of domain architecture, MOSC spans 187 to 335; that stretch reads MRPRRPHQIA…IKVGDPVYLL (149 aa). Positions 210, 211, 238, 240, 271, 272, 273, and 317 each coordinate Mo-molybdopterin.

In terms of assembly, component of a complex composed of cytochrome b5, NADH-cytochrome b5 reductase and MTARC1. The cofactor is Mo-molybdopterin.

It is found in the mitochondrion outer membrane. The protein resides in the membrane. The catalysed reaction is N(omega)-hydroxy-L-arginine + 2 Fe(II)-[cytochrome b5] + 2 H(+) = L-arginine + 2 Fe(III)-[cytochrome b5] + H2O. In terms of biological role, catalyzes the reduction of N-oxygenated molecules, acting as a counterpart of cytochrome P450 and flavin-containing monooxygenases in metabolic cycles. As a component of prodrug-converting system, reduces a multitude of N-hydroxylated prodrugs particularly amidoximes, leading to increased drug bioavailability. May be involved in mitochondrial N(omega)-hydroxy-L-arginine (NOHA) reduction, regulating endogenous nitric oxide levels and biosynthesis. Postulated to cleave the N-OH bond of N-hydroxylated substrates in concert with electron transfer from NADH to cytochrome b5 reductase then to cytochrome b5, the ultimate electron donor that primes the active site for substrate reduction. The chain is Mitochondrial amidoxime-reducing component 1 from Homo sapiens (Human).